The following is a 301-amino-acid chain: Protease HtpX (301 aa).

2 helical membrane passes run 4–24 (IGLFLLTNLAVLVVAGIILSL) and 38–58 (LGNLLVICFVFGMVGSLVSLF). His-147 is a binding site for Zn(2+). Residue Glu-148 is part of the active site. His-151 contributes to the Zn(2+) binding site. The next 2 helical transmembrane spans lie at 155-175 (GDMVTLALIQGVVNAFVMFFA) and 200-220 (FIITMVLDIVFGILASAIVMW). Glu-226 serves as a coordination point for Zn(2+).

It belongs to the peptidase M48B family. Requires Zn(2+) as cofactor.

The protein localises to the cell inner membrane. The protein is Protease HtpX of Acinetobacter baumannii (strain AB307-0294).